The primary structure comprises 218 residues: Glutathione S-transferase Mu 7 (218 aa).

In terms of domain architecture, GST N-terminal spans 1 to 88 (MPMTLGYWDI…YLGRKHNLCG (88 aa)). Glutathione-binding positions include 7 to 8 (YW), 46 to 50 (WLNEK), 59 to 60 (NL), and 72 to 73 (QS). The 119-residue stretch at 90–208 (TEEERIRVDI…KTSRFLPRPM (119 aa)) folds into the GST C-terminal domain. Tyrosine 116 lines the substrate pocket.

This sequence belongs to the GST superfamily. Mu family. In terms of assembly, homodimer.

The protein localises to the cytoplasm. The catalysed reaction is RX + glutathione = an S-substituted glutathione + a halide anion + H(+). Functionally, conjugation of reduced glutathione to a wide number of exogenous and endogenous hydrophobic electrophiles. This Mus musculus (Mouse) protein is Glutathione S-transferase Mu 7 (Gstm7).